The sequence spans 586 residues: Probable zinc metalloprotease EGY3, chloroplastic (586 aa).

Residues 1–54 (MSSSSLVTSLLFSSSSSSNTATSTSSRRSFSLFSKNQYCKPSPLRRSSSLLLVR) constitute a chloroplast transit peptide. Residues 62-73 (EEKAAPAAESHH) are compositionally biased toward basic and acidic residues. The tract at residues 62–118 (EEKAAPAAESHHAGGGQDDAATASHHAVEGENGVADADGGGVKKSKEELEEEEQQEV) is disordered. The stretch at 103-195 (VKKSKEELEE…NTFKALDLNK (93 aa)) forms a coiled coil. Transmembrane regions (helical) follow at residues 287 to 307 (LSAV…SGFF), 318 to 338 (VSDV…SEIA), 389 to 409 (ASAY…DGSL), 427 to 447 (PLLS…GNVL), 454 to 474 (VGVP…VTSL), 506 to 526 (VALG…WGLF), and 550 to 570 (YAWG…NGGG).

It belongs to the peptidase M50B family.

The protein localises to the plastid. It is found in the chloroplast membrane. Functionally, probable membrane-associated metalloprotease that may be involved in chloroplast development. The protein is Probable zinc metalloprotease EGY3, chloroplastic (EGY3) of Oryza sativa subsp. indica (Rice).